Reading from the N-terminus, the 186-residue chain is Adenine phosphoribosyltransferase (186 aa).

It belongs to the purine/pyrimidine phosphoribosyltransferase family. Homodimer.

It localises to the cytoplasm. The catalysed reaction is AMP + diphosphate = 5-phospho-alpha-D-ribose 1-diphosphate + adenine. It participates in purine metabolism; AMP biosynthesis via salvage pathway; AMP from adenine: step 1/1. In terms of biological role, catalyzes a salvage reaction resulting in the formation of AMP, that is energically less costly than de novo synthesis. In Xanthomonas axonopodis pv. citri (strain 306), this protein is Adenine phosphoribosyltransferase.